Consider the following 200-residue polypeptide: 3-isopropylmalate dehydratase small subunit (200 aa).

Belongs to the LeuD family. LeuD type 1 subfamily. In terms of assembly, heterodimer of LeuC and LeuD.

It carries out the reaction (2R,3S)-3-isopropylmalate = (2S)-2-isopropylmalate. It functions in the pathway amino-acid biosynthesis; L-leucine biosynthesis; L-leucine from 3-methyl-2-oxobutanoate: step 2/4. Catalyzes the isomerization between 2-isopropylmalate and 3-isopropylmalate, via the formation of 2-isopropylmaleate. The chain is 3-isopropylmalate dehydratase small subunit from Pectobacterium atrosepticum (strain SCRI 1043 / ATCC BAA-672) (Erwinia carotovora subsp. atroseptica).